A 231-amino-acid chain; its full sequence is L-ribulose-5-phosphate 4-epimerase SgbE (231 aa).

Substrate is bound by residues G27–N28, S44–G45, and S74–S75. Positions 76, 95, and 97 each coordinate Zn(2+). Residue D120 is the Proton donor/acceptor of the active site. A Zn(2+)-binding site is contributed by H171. Y229 serves as the catalytic Proton donor/acceptor.

It belongs to the aldolase class II family. AraD/FucA subfamily. It depends on Zn(2+) as a cofactor.

It catalyses the reaction L-ribulose 5-phosphate = D-xylulose 5-phosphate. Its function is as follows. Catalyzes the interconversion of L-ribulose 5-phosphate (LRu5P) and D-xylulose 5-phosphate (D-Xu5P) via a retroaldol/aldol mechanism (carbon-carbon bond cleavage analogous to a class II aldolase reaction). May be involved in the utilization of 2,3-diketo-L-gulonate. This Escherichia coli (strain K12) protein is L-ribulose-5-phosphate 4-epimerase SgbE.